Here is a 106-residue protein sequence, read N- to C-terminus: MAQAIGPRLYSCCNCRNHVGLHDDIISKAFQGRTGRAFLFSHAMNIVVGPKEDRNLLTGLHTVADISCVDCNEPLGWKYERAYETSQKYKEGKFIFEKAKIVKEDW.

Residues 8-105 (RLYSCCNCRN…FEKAKIVKED (98 aa)) enclose the Yippee domain. Residues cysteine 12, cysteine 15, cysteine 68, and cysteine 71 each coordinate Zn(2+).

This sequence belongs to the yippee family.

This Arabidopsis thaliana (Mouse-ear cress) protein is Protein yippee-like At4g27745.